The following is a 583-amino-acid chain: 15-cis-phytoene desaturase, chloroplastic/chromoplastic (583 aa).

The transit peptide at M1–P111 directs the protein to the chloroplast and chromoplast. FAD is bound by residues G118–G134, E141–A142, K149, H166–I167, and Y172. Residue R307 participates in substrate binding. Residues I349 and D538 each coordinate FAD. Residue A546 coordinates substrate. Residue M548 participates in FAD binding.

The protein belongs to the carotenoid/retinoid oxidoreductase family. As to quaternary structure, homotetramer. Requires FAD as cofactor.

The protein resides in the plastid. Its subcellular location is the chloroplast. It localises to the chromoplast. It is found in the membrane. It catalyses the reaction 2 a plastoquinone + 15-cis-phytoene = 9,9',15-tri-cis-zeta-carotene + 2 a plastoquinol. The protein operates within carotenoid biosynthesis; lycopene biosynthesis. Functionally, converts phytoene into zeta-carotene via the intermediary of phytofluene by the symmetrical introduction of two double bonds at the C-11 and C-11' positions of phytoene with a concomitant isomerization of two neighboring double bonds at the C9 and C9' positions from trans to cis. The sequence is that of 15-cis-phytoene desaturase, chloroplastic/chromoplastic (PDS) from Solanum lycopersicum (Tomato).